A 473-amino-acid polypeptide reads, in one-letter code: Cysteine--tRNA ligase (473 aa).

A Zn(2+)-binding site is contributed by C28. A 'HIGH' region motif is present at residues 30–40 (PTVYNMPHIGN). Residues C213, H238, and E242 each contribute to the Zn(2+) site. A 'KMSKS' region motif is present at residues 270-274 (KMSKS). K273 lines the ATP pocket.

The protein belongs to the class-I aminoacyl-tRNA synthetase family. It depends on Zn(2+) as a cofactor.

The protein localises to the cytoplasm. It carries out the reaction tRNA(Cys) + L-cysteine + ATP = L-cysteinyl-tRNA(Cys) + AMP + diphosphate. This chain is Cysteine--tRNA ligase, found in Methanosarcina mazei (strain ATCC BAA-159 / DSM 3647 / Goe1 / Go1 / JCM 11833 / OCM 88) (Methanosarcina frisia).